A 402-amino-acid polypeptide reads, in one-letter code: Serine--glyoxylate aminotransferase (402 aa).

Lysine 201 carries the N6-(pyridoxal phosphate)lysine modification.

The protein belongs to the class-V pyridoxal-phosphate-dependent aminotransferase family. Pyridoxal 5'-phosphate is required as a cofactor.

It catalyses the reaction glyoxylate + L-serine = 3-hydroxypyruvate + glycine. The protein operates within one-carbon metabolism; formaldehyde assimilation via serine pathway. This is Serine--glyoxylate aminotransferase from Methylorubrum extorquens (strain ATCC 14718 / DSM 1338 / JCM 2805 / NCIMB 9133 / AM1) (Methylobacterium extorquens).